The chain runs to 59 residues: MAVQQNKKSPSKRGMHRSHDALTAPALSVDSTTGEVHRPHHISPNGMYRGRKVVKVKGE.

The segment at Met-1–Glu-59 is disordered. The segment covering Arg-49–Glu-59 has biased composition (basic residues).

This sequence belongs to the bacterial ribosomal protein bL32 family.

The protein is Large ribosomal subunit protein bL32 (rpmF) of Neisseria meningitidis serogroup A / serotype 4A (strain DSM 15465 / Z2491).